The chain runs to 1947 residues: Sodium channel protein type 3 subunit alpha (1947 aa).

Residues 1 to 128 (MAQALLVPPG…KIAIKILVHS (128 aa)) are Cytoplasmic-facing. The tract at residues 28–60 (RAAEEKAKKPKKEQDIDDENKPKPNSDLEAGKN) is disordered. Positions 46 to 57 (ENKPKPNSDLEA) are enriched in basic and acidic residues. The I repeat unit spans residues 110–455 (ILTPLNPVRK…QQMLEQLKKQ (346 aa)). A helical transmembrane segment spans residues 129–146 (LFSMLIMCTILTNCVFMT). The Extracellular portion of the chain corresponds to 147-152 (LSNPPD). Residues 153–174 (WTKNVEYTFTGIYTFESLIKIL) form a helical membrane-spanning segment. At 175-188 (ARGFCLEDFTFLRD) the chain is on the cytoplasmic side. The helical transmembrane segment at 189–206 (PWNWLDFSVIVMAYVTEF) threads the bilayer. The Extracellular segment spans residues 207-213 (VDLGNVS). An N-linked (GlcNAc...) asparagine glycan is attached at Asn211. Residues 214-235 (ALRTFRVLRALKTISVIPGLKT) traverse the membrane as a helical segment. Residues 236–249 (IVGALIQSVKKLSD) are Cytoplasmic-facing. Residues 250 to 269 (VMILTVFCLSVFALIGLQLF) form a helical membrane-spanning segment. The Extracellular portion of the chain corresponds to 270-369 (MGNLRNKCLQ…NYGYTSFDTF (100 aa)). N-linked (GlcNAc...) asparagine glycans are attached at residues Asn290, Asn296, Asn302, Asn307, and Asn339. The segment at residues 370–386 (SWAFLSLFRLMTQDYWE) is an intramembrane region (pore-forming). The Extracellular segment spans residues 387–397 (NLYQLTLRAAG). The helical transmembrane segment at 398-424 (KTYMIFFVLVIFLGSFYLVNLILAVVA) threads the bilayer. Over 425 to 712 (MAYEEQNQAT…LVNLIVMDPF (288 aa)) the chain is Cytoplasmic. 3 positions are modified to phosphoserine: Ser484, Ser485, and Ser486. Disordered regions lie at residues 493–529 (SKSA…SESE) and 587–632 (VGSE…ETEV). The span at 500-509 (RNRRKKRRQR) shows a compositional bias: basic residues. 2 stretches are compositionally biased toward basic and acidic residues: residues 510-529 (EHLE…SESE) and 596-622 (DEHS…ERRN). Residues 693 to 965 (CCDSWLKVKH…QIAVGRMQKG (273 aa)) form an II repeat. A helical transmembrane segment spans residues 713–730 (VDLAITICIVLNTLFMAM). The Extracellular segment spans residues 731–738 (EHYPMTEQ). A helical transmembrane segment spans residues 739–763 (FSSVLTVGNLVFTGIFTAEMVLKII). Residues 764–773 (AMDPYYYFQE) are Cytoplasmic-facing. A helical transmembrane segment spans residues 774–793 (GWNIFDGIIVSLSLMELGLA). Over 794–797 (NVEG) the chain is Extracellular. A helical membrane pass occupies residues 798–816 (LSVLRSFRLLRVFKLAKSW). The Cytoplasmic portion of the chain corresponds to 817 to 834 (PTLNMLIKIIGNSVGALG). The chain crosses the membrane as a helical span at residues 835 to 855 (NLTLVLAIIVFIFAVVGMQLF). Residues 856–880 (GKSYKECVCKINEDCKLPRWHMNDF) lie on the Extracellular side of the membrane. Residues Cys864 and Cys870 are joined by a disulfide bond. Positions 881–896 (FHSFLIVFRVLCGEWI) form an intramembrane region, pore-forming. At 897–907 (ETMWDCMEVAG) the chain is on the extracellular side. A disulfide bond links Cys902 and Cys911. A helical membrane pass occupies residues 908–934 (QTMCLIVFMLVMVIGNLVVLNLFLALL). Residues 935–1157 (LSSFSSDNLA…RKTCYSIVEH (223 aa)) lie on the Cytoplasmic side of the membrane. A disordered region spans residues 1070 to 1113 (EEFSSESELEESKEKLNATSSSEGSTVDVAPPREGEQAEIEPEE). The stretch at 1140–1451 (KGKIWWNLRK…KKYYNAMKKL (312 aa)) is one III repeat. A helical membrane pass occupies residues 1158–1178 (NWFETFIVFMILLSSGALAFE). Over 1179 to 1190 (DIYIEQRKTIKT) the chain is Extracellular. Residues 1191–1212 (MLEYADKVFTYIFILEMLLKWV) traverse the membrane as a helical segment. Residues 1213 to 1218 (AYGFQT) are Cytoplasmic-facing. A helical membrane pass occupies residues 1219–1244 (YFTNAWCWLDFLIVDVSLVSLVANAL). At 1245–1253 (GYSELGAIK) the chain is on the extracellular side. Residues 1254–1272 (SLRTLRALRPLRALSRFEG) form a helical membrane-spanning segment. Topologically, residues 1273 to 1285 (MRVVVNALVGAIP) are cytoplasmic. Residues 1286–1308 (SIMNVLLVCLIFWLIFSIMGVNL) traverse the membrane as a helical segment. Residues 1309-1354 (FAGKFYHCVNMTTGSMFDMSEVNNFSDCQALGKQARWKNVKVNFDN) are Extracellular-facing. A disulfide bond links Cys1316 and Cys1336. N-linked (GlcNAc...) asparagine glycosylation is found at Asn1318 and Asn1332. Residues 1355-1371 (VGAGYLALLQVATFKGW) constitute an intramembrane region (pore-forming). The Extracellular portion of the chain corresponds to 1372–1394 (MDIMYAAVDSRDVKLQPVYEENL). The helical transmembrane segment at 1395 to 1420 (YMYLYFVIFIIFGSFFTLNLFIGVII) threads the bilayer. The Cytoplasmic portion of the chain corresponds to 1421-1478 (DNFNQQKKKFGGQDIFMTEEQKKYYNAMKKLGSKKPQKPIPRPANKFQGMVFDFVTRQ). Residue Ser1453 is modified to Phosphoserine. An IV repeat occupies 1460–1758 (IPRPANKFQG…WEKFDPDATQ (299 aa)). Residues 1479-1497 (VFDISIMILICLNMVTMMV) traverse the membrane as a helical segment. The Extracellular segment spans residues 1498–1505 (ETDDQSKY). The helical transmembrane segment at 1506–1529 (MTLVLSRINLVFIVLFTGEFLLKL) threads the bilayer. The Cytoplasmic segment spans residues 1530–1539 (ISLRYYYFTI). The chain crosses the membrane as a helical span at residues 1540-1557 (GWNIFDFVVVILSIVGMF). The Extracellular segment spans residues 1558–1569 (LAELIEKYFVSP). The chain crosses the membrane as a helical span at residues 1570 to 1592 (TLFRVIRLARIGRILRLIKGAKG). The Cytoplasmic segment spans residues 1593–1605 (IRTLLFALMMSLP). Residues 1606–1629 (ALFNIGLLLFLVMFIYAIFGMSNF) traverse the membrane as a helical segment. Residues 1630–1651 (AYVKKEAGIDDMFNFETFGNSM) lie on the Extracellular side of the membrane. Positions 1652–1664 (ICLFQITTSAGWD) form an intramembrane region, pore-forming. The Extracellular segment spans residues 1665-1696 (GLLAPILNSAPPDCDPDAIHPGSSVKGDCGNP). The chain crosses the membrane as a helical span at residues 1697 to 1722 (SVGIFFFVSYIIISFLVVVNMYIAVI). Residues 1723–1947 (LENFSVATEE…PEKESKGKEV (225 aa)) are Cytoplasmic-facing. Residues 1852–1881 (EEVSAAIIQRNYRCYLLKQRLKNISNTYDK) form the IQ domain. The segment at 1901–1947 (LNGNSTPEKTDGSSSTTSPPSYDSVTKPDKEKFEKDKPEKESKGKEV) is disordered. The segment covering 1926-1947 (TKPDKEKFEKDKPEKESKGKEV) has biased composition (basic and acidic residues).

This sequence belongs to the sodium channel (TC 1.A.1.10) family. Nav1.3/SCN3A subfamily. As to quaternary structure, heterooligomer of an alpha subunit, SCN3A, and 1 to 3 regulatory beta subunits including SCN1B and SCN2B; disulfide-linked with some beta subunits like SCN2B. Interacts with NEDD4L; could regulate expression of SCN3A at the plasma membrane through ubiquitination-regulated endocytosis. May be ubiquitinated by NEDD4L; which would promote its endocytosis. In terms of processing, phosphorylation at Ser-1453 in a highly conserved cytoplasmic loop slows inactivation of the channel and reduces peak sodium currents. As to expression, expressed in enterochromaffin cells in both colon and small bowel (at protein level). Expressed in pancreatic alpha and beta cells.

It localises to the cell membrane. The protein localises to the basal cell membrane. It carries out the reaction Na(+)(in) = Na(+)(out). In terms of biological role, pore-forming subunit of Nav1.3, a voltage-gated sodium (Nav) channel that directly mediates the depolarizing phase of action potentials in excitable membranes. Navs, also called VGSCs (voltage-gated sodium channels) or VDSCs (voltage-dependent sodium channels), operate by switching between closed and open conformations depending on the voltage difference across the membrane. In the open conformation they allow Na(+) ions to selectively pass through the pore, along their electrochemical gradient. The influx of Na+ ions provokes membrane depolarization, initiating the propagation of electrical signals throughout cells and tissues. In some secretory cell types, it also participates in cell excitability through membrane depolarization and regulates cells responsiveness to stimuli triggering secretion. For instance, it controls the release of serotonin/5-hydroxytryptamine by enterochromaffin cells and is required for both glucagon- and glucose-induced insulin secretion in pancreatic endocrine cells. In Mus musculus (Mouse), this protein is Sodium channel protein type 3 subunit alpha.